The sequence spans 61 residues: Small ribosomal subunit protein uS14 (61 aa).

C24, C27, C40, and C43 together coordinate Zn(2+).

It belongs to the universal ribosomal protein uS14 family. Zinc-binding uS14 subfamily. In terms of assembly, part of the 30S ribosomal subunit. Contacts proteins S3 and S10. It depends on Zn(2+) as a cofactor.

Its function is as follows. Binds 16S rRNA, required for the assembly of 30S particles and may also be responsible for determining the conformation of the 16S rRNA at the A site. The polypeptide is Small ribosomal subunit protein uS14 (Mycoplasmopsis pulmonis (strain UAB CTIP) (Mycoplasma pulmonis)).